Here is a 445-residue protein sequence, read N- to C-terminus: TNF receptor-associated factor family protein DDB_G0290971 (445 aa).

An RING-type; degenerate zinc finger spans residues 23-67; sequence CPICFDLYYSSSSKKEVFQCRDGHLACKSCWSDSLLNKKECMICR. 2 TRAF-type zinc fingers span residues 133–186 and 186–242; these read KHQV…QLDA and AHAL…ESID. Positions 269–307 form a coiled coil; it reads QLELVECKNQIYQINNKYEKLLERVIKLEQLSMDASNKL. In terms of domain architecture, MATH spans 314 to 441; it reads KNSIIFATFS…EDKLVIGLRI (128 aa).

Belongs to the TNF receptor-associated factor family. A subfamily.

The protein resides in the cytoplasm. Its function is as follows. Probable adapter protein and signal transducer that links members of the tumor necrosis factor receptor family to different signaling pathways by association with the receptor cytoplasmic domain and kinases. The chain is TNF receptor-associated factor family protein DDB_G0290971 from Dictyostelium discoideum (Social amoeba).